The chain runs to 178 residues: MHSSALLCCLVLLTGVRASPGQGTQSENSCTRFPGNLPHMLRDLRDAFSRVKTFFQMKDQLDNILLKESLLEDFKGYLGCQALSEMIQFYLEEVMPQAENHDPDIKEHVNSLGENLKTLRLRLRRCHRFLPCENKSKAVEQVKNAFSKLQEKGVYKAMSEFDIFINYIEAYMTMKIRN.

Positions 1 to 18 are cleaved as a signal peptide; that stretch reads MHSSALLCCLVLLTGVRA. Disulfide bonds link Cys-30/Cys-126 and Cys-80/Cys-132. An N-linked (GlcNAc...) asparagine glycan is attached at Asn-134.

Belongs to the IL-10 family. As to quaternary structure, homodimer. Interacts with IL10RA and IL10RB.

It is found in the secreted. Functionally, major immune regulatory cytokine that acts on many cells of the immune system where it has profound anti-inflammatory functions, limiting excessive tissue disruption caused by inflammation. Mechanistically, IL10 binds to its heterotetrameric receptor comprising IL10RA and IL10RB leading to JAK1 and STAT2-mediated phosphorylation of STAT3. In turn, STAT3 translocates to the nucleus where it drives expression of anti-inflammatory mediators. Targets antigen-presenting cells (APCs) such as macrophages and monocytes and inhibits their release of pro-inflammatory cytokines including granulocyte-macrophage colony-stimulating factor /GM-CSF, granulocyte colony-stimulating factor/G-CSF, IL-1 alpha, IL-1 beta, IL-6, IL-8 and TNF-alpha. Also interferes with antigen presentation by reducing the expression of MHC-class II and co-stimulatory molecules, thereby inhibiting their ability to induce T cell activation. In addition, controls the inflammatory response of macrophages by reprogramming essential metabolic pathways including mTOR signaling. The chain is Interleukin-10 (IL10) from Macaca fascicularis (Crab-eating macaque).